The sequence spans 203 residues: Endo-type membrane-bound lytic murein transglycosylase A (203 aa).

The signal sequence occupies residues methionine 1–glycine 15. The N-palmitoyl cysteine moiety is linked to residue cysteine 16. Cysteine 16 is lipidated: S-diacylglycerol cysteine.

The protein belongs to the transglycosylase Slt family.

Its subcellular location is the cell outer membrane. The catalysed reaction is Endolytic cleavage of the (1-&gt;4)-beta-glycosidic linkage between N-acetylmuramic acid (MurNAc) and N-acetylglucosamine (GlcNAc) residues in peptidoglycan with concomitant formation of a 1,6-anhydrobond in the MurNAc residue.. In terms of biological role, murein-degrading enzyme. May play a role in recycling of muropeptides during cell elongation and/or cell division. Preferentially cleaves at a distance of more than two disaccharide units from the ends of the glycan chain. This is Endo-type membrane-bound lytic murein transglycosylase A from Cronobacter sakazakii (strain ATCC BAA-894) (Enterobacter sakazakii).